Consider the following 525-residue polypeptide: Allantoate deiminase (525 aa).

The first 53 residues, 1-53 (MAVPHPSSSSSRSHPFLSHVYHTSFHHHHHHNHPSLVLFWCLVFSLLSPLALS), serve as a signal peptide directing secretion. The span at 56-75 (SSSSSSSSDSSSSSSSHISL) shows a compositional bias: low complexity. The segment at 56-78 (SSSSSSSSDSSSSSSSHISLGIG) is disordered. An N-linked (GlcNAc...) asparagine glycan is attached at Asn156. Mn(2+) contacts are provided by His167, Asp178, Glu215, His281, and His499.

Belongs to the peptidase M20A family. As to quaternary structure, homodimer. Requires Mn(2+) as cofactor. In terms of tissue distribution, expressed in seedlings, roots, stems, leaves, flowers, siliques and seeds.

It is found in the endoplasmic reticulum. It carries out the reaction allantoate + H2O + 2 H(+) = (S)-2-ureidoglycine + NH4(+) + CO2. With respect to regulation, inhibited by borate, fluoride, L-Asn and L-Asp, but not by phenylphosphorodiamidate. Its function is as follows. Involved in the catabolism of purine nucleotides. Can use allantoate as substrate, but not Nalpha-carbamoyl-L-Asp, Nalpha-carbamoyl-L-Ala or Nalpha-carbamoyl-Gly. The sequential activity of AAH, UGLYAH and UAH allows a complete purine breakdown without the intermediate generation of urea. Involved in the regulation of seed maturation and seed dormancy. The sequence is that of Allantoate deiminase from Arabidopsis thaliana (Mouse-ear cress).